A 245-amino-acid polypeptide reads, in one-letter code: Eukaryotic translation initiation factor 3 subunit K (245 aa).

The PCI domain occupies 46–227 (YDCYANLALL…EAKGTVVREN (182 aa)).

It belongs to the eIF-3 subunit K family. In terms of assembly, component of the eukaryotic translation initiation factor 3 (eIF-3) complex.

The protein localises to the cytoplasm. In terms of biological role, component of the eukaryotic translation initiation factor 3 (eIF-3) complex, which is involved in protein synthesis of a specialized repertoire of mRNAs and, together with other initiation factors, stimulates binding of mRNA and methionyl-tRNAi to the 40S ribosome. The eIF-3 complex specifically targets and initiates translation of a subset of mRNAs involved in cell proliferation. This Sclerotinia sclerotiorum (strain ATCC 18683 / 1980 / Ss-1) (White mold) protein is Eukaryotic translation initiation factor 3 subunit K.